A 1325-amino-acid chain; its full sequence is ATP-binding cassette sub-family C member 4 (1325 aa).

The 286-residue stretch at 92-377 (YLVLGIFTLI…FFPSAIERVS (286 aa)) folds into the ABC transmembrane type-1 1 domain. The next 7 helical transmembrane spans lie at 93-113 (LVLG…PIFL), 136-156 (AYAT…HLYF), 207-227 (QVTV…AVTA), 228-248 (LLWM…IILL), 328-348 (SKII…VITA), 351-371 (VFVA…FFPS), and 440-460 (LLAV…AVLG). The 224-residue stretch at 410–633 (VHVQDFTAFW…GIDFGSLLKK (224 aa)) folds into the ABC transporter 1 domain. 445-452 (GPVGAGKS) serves as a coordination point for ATP. Residues Thr-646 and Thr-648 each carry the phosphothreonine modification. The span at 657-667 (SSVWSQQSSRP) shows a compositional bias: low complexity. Positions 657–688 (SSVWSQQSSRPSLKDGALESQDTENVPVTLSE) are disordered. Phosphoserine occurs at positions 664 and 668. A helical transmembrane segment spans residues 710 to 730 (HWIVFIFLILLNTAAQVAYVL). An ABC transmembrane type-1 2 domain is found at 714 to 1005 (FIFLILLNTA…CVRQSAEVEN (292 aa)). Asn-746 and Asn-754 each carry an N-linked (GlcNAc...) asparagine glycan. 6 consecutive transmembrane segments (helical) span residues 771–791 (LTVA…YVLV), 836–856 (LPLT…VVSV), 858–878 (VAVI…FIFL), 954–974 (AICA…AKTL), 977–997 (GQVG…QWCV), and 1038–1058 (EGVI…PLVL). Residues 1041–1274 (IIFDNVNFMY…KESLFYKMVQ (234 aa)) enclose the ABC transporter 2 domain. 1075–1082 (GRTGAGKS) serves as a coordination point for ATP. A PDZ-binding motif is present at residues 1322–1325 (ETAL).

It belongs to the ABC transporter superfamily. ABCC family. Conjugate transporter (TC 3.A.1.208) subfamily. In terms of assembly, interacts (via PDZ-binding motif) with SNX27 (via PDZ domain); this interaction accelerates MRP4 internalization. Requires Mg(2+) as cofactor. In terms of processing, N-glycosylated; leading to substrate-selective effects on its transport activity. In terms of tissue distribution, widely expressed, with particularly high levels in prostate, but is barely detectable in liver. sinusoidal membrane of hepatocytes.

Its subcellular location is the basolateral cell membrane. The protein resides in the apical cell membrane. The enzyme catalyses ATP + H2O + xenobioticSide 1 = ADP + phosphate + xenobioticSide 2.. It catalyses the reaction an S-substituted glutathione(in) + ATP + H2O = an S-substituted glutathione(out) + ADP + phosphate + H(+). It carries out the reaction 17beta-estradiol 17-O-(beta-D-glucuronate)(in) + ATP + H2O = 17beta-estradiol 17-O-(beta-D-glucuronate)(out) + ADP + phosphate + H(+). The catalysed reaction is dehydroepiandrosterone 3-sulfate(in) + ATP + H2O = dehydroepiandrosterone 3-sulfate(out) + ADP + phosphate + H(+). The enzyme catalyses leukotriene C4(in) + ATP + H2O = leukotriene C4(out) + ADP + phosphate + H(+). It catalyses the reaction leukotriene B4(in) + ATP + H2O = leukotriene B4(out) + ADP + phosphate + H(+). It carries out the reaction urate(in) + ATP + H2O = urate(out) + ADP + phosphate + H(+). The catalysed reaction is 3',5'-cyclic GMP(in) + ATP + H2O = 3',5'-cyclic GMP(out) + ADP + phosphate + H(+). The enzyme catalyses 3',5'-cyclic AMP(in) + ATP + H2O = 3',5'-cyclic AMP(out) + ADP + phosphate + H(+). It catalyses the reaction prostaglandin E2(in) + ATP + H2O = prostaglandin E2(out) + ADP + phosphate + H(+). It carries out the reaction prostaglandin E1(in) + ATP + H2O = prostaglandin E1(out) + ADP + phosphate + H(+). The catalysed reaction is glycodeoxycholate(in) + glutathione(in) + ATP + H2O = glycodeoxycholate(out) + glutathione(out) + ADP + phosphate + H(+). The enzyme catalyses cholate(in) + glutathione(in) + ATP + H2O = cholate(out) + glutathione(out) + ADP + phosphate + H(+). It catalyses the reaction glycocholate(in) + glutathione(in) + ATP + H2O = glycocholate(out) + glutathione(out) + ADP + phosphate + H(+). It carries out the reaction taurocholate(in) + glutathione(in) + ATP + H2O = taurocholate(out) + glutathione(out) + ADP + phosphate + H(+). The catalysed reaction is glycochenodeoxycholate(in) + glutathione(in) + ATP + H2O = glycochenodeoxycholate(out) + glutathione(out) + ADP + phosphate + H(+). The enzyme catalyses taurochenodeoxycholate(in) + glutathione(in) + ATP + H2O = taurochenodeoxycholate(out) + glutathione(out) + ADP + phosphate + H(+). It catalyses the reaction glycoursodeoxycholate(in) + glutathione(in) + ATP + H2O = glycoursodeoxycholate(out) + glutathione(out) + ADP + phosphate + H(+). It carries out the reaction tauroursodeoxycholate(in) + glutathione(in) + ATP + H2O = tauroursodeoxycholate(out) + glutathione(out) + ADP + phosphate + H(+). Its activity is regulated as follows. GSH stimulates the transport of MRP4. Urate inhibits methotrexate transport but stimulates cGMP transport. Nonsteroidal anti-inflammatory drugs (NSAIDs) strongly suppress the transport of MRP4 substrates. Functionally, ATP-dependent transporter of the ATP-binding cassette (ABC) family that actively extrudes physiological compounds and xenobiotics from cells. Transports a range of endogenous molecules that have a key role in cellular communication and signaling, including cyclic nucleotides such as cyclic AMP (cAMP) and cyclic GMP (cGMP), bile acids, steroid conjugates, urate, and prostaglandins. Mediates the ATP-dependent efflux of glutathione conjugates such as leukotriene C4 (LTC4) and leukotriene B4 (LTB4) too. The presence of GSH is necessary for the ATP-dependent transport of LTB4, whereas GSH is not required for the transport of LTC4. Mediates the cotransport of bile acids with reduced glutathione (GSH). Transports a wide range of drugs and their metabolites, including anticancer, antiviral and antibiotics molecules. Confers resistance to anticancer agents such as methotrexate. This Homo sapiens (Human) protein is ATP-binding cassette sub-family C member 4 (ABCC4).